A 501-amino-acid polypeptide reads, in one-letter code: Fumarate reductase 2 (501 aa).

The transit peptide at 1–32 directs the protein to the mitochondrion; sequence MIRSVRRVFIYVSIFVLIIVLKRTLSGTDQTS. An FAD-binding site is contributed by 37 to 51; that stretch reads VVVIGSGLAGLTTSN. Catalysis depends on residues His-281 and Arg-304.

The protein belongs to the FAD-dependent oxidoreductase 2 family. FRD/SDH subfamily. The cofactor is FAD.

It is found in the mitochondrion. It catalyses the reaction succinate + NAD(+) = fumarate + NADH + H(+). Functionally, irreversibly catalyzes the reduction of fumarate to succinate. Together with the second isozyme of soluble fumarate reductase (FRD1), essential for anaerobic growth. Involved in maintaining redox balance during oxygen deficiency conditions. Reduction of fumarate is the main source of succinate during fermentation, and under anaerobic conditions, the formation of succinate is strictly required for the reoxidation of FADH(2). The protein is Fumarate reductase 2 (OSM1) of Saccharomyces cerevisiae (strain ATCC 204508 / S288c) (Baker's yeast).